The chain runs to 132 residues: Small ribosomal subunit protein uS8c (132 aa).

The protein belongs to the universal ribosomal protein uS8 family. In terms of assembly, part of the 30S ribosomal subunit.

It localises to the plastid. Its subcellular location is the cyanelle. In terms of biological role, one of the primary rRNA binding proteins, it binds directly to 16S rRNA central domain where it helps coordinate assembly of the platform of the 30S subunit. In Cyanophora paradoxa, this protein is Small ribosomal subunit protein uS8c (rps8).